We begin with the raw amino-acid sequence, 349 residues long: T-cell immunoglobulin and mucin domain-containing protein 2 (349 aa).

A signal peptide spans Met-1–Ala-20. Over Ser-21–Gly-275 the chain is Extracellular. The region spanning Tyr-22–Glu-123 is the Ig-like V-type domain. Intrachain disulfides connect Cys-34–Cys-107, Cys-48–Cys-59, and Cys-54–Cys-106. 2 N-linked (GlcNAc...) asparagine glycosylation sites follow: Asn-84 and Asn-89. The tract at residues Leu-128–Asn-271 is disordered. The segment covering Pro-136–Thr-215 has biased composition (low complexity). Positions Ala-222 to Thr-260 are enriched in polar residues. The helical transmembrane segment at Phe-276 to Ile-296 threads the bilayer. Topologically, residues Thr-297–Ser-349 are cytoplasmic.

It belongs to the immunoglobulin superfamily. TIM family. In terms of assembly, homodimer.

Its subcellular location is the cell membrane. Its function is as follows. Probable receptor for SEMA4A involved in the regulation of T-cell function. The interaction with SEMA4A enhances T-cell activation. The protein is T-cell immunoglobulin and mucin domain-containing protein 2 (Timd2) of Rattus norvegicus (Rat).